The following is a 391-amino-acid chain: Alkanesulfonate monooxygenase (391 aa).

Belongs to the SsuD family.

The enzyme catalyses an alkanesulfonate + FMNH2 + O2 = an aldehyde + FMN + sulfite + H2O + 2 H(+). Functionally, catalyzes the desulfonation of aliphatic sulfonates. This Paracidovorax citrulli (strain AAC00-1) (Acidovorax citrulli) protein is Alkanesulfonate monooxygenase.